The sequence spans 222 residues: 2-C-methyl-D-erythritol 4-phosphate cytidylyltransferase (222 aa).

It belongs to the IspD/TarI cytidylyltransferase family. IspD subfamily.

It carries out the reaction 2-C-methyl-D-erythritol 4-phosphate + CTP + H(+) = 4-CDP-2-C-methyl-D-erythritol + diphosphate. Its pathway is isoprenoid biosynthesis; isopentenyl diphosphate biosynthesis via DXP pathway; isopentenyl diphosphate from 1-deoxy-D-xylulose 5-phosphate: step 2/6. In terms of biological role, catalyzes the formation of 4-diphosphocytidyl-2-C-methyl-D-erythritol from CTP and 2-C-methyl-D-erythritol 4-phosphate (MEP). The chain is 2-C-methyl-D-erythritol 4-phosphate cytidylyltransferase from Porphyromonas gingivalis (strain ATCC 33277 / DSM 20709 / CIP 103683 / JCM 12257 / NCTC 11834 / 2561).